The following is a 316-amino-acid chain: tRNA-splicing endonuclease subunit Sen34 (316 aa).

The interval 120–184 is disordered; the sequence is QAAKKQKLEQ…PGPSNGVTPL (65 aa). 2 stretches are compositionally biased toward polar residues: residues 144 to 159 and 168 to 181; these read EATQGSETSDDGQPSA and LDSSSPQPGPSNGV. Active-site residues include Tyr-253, His-261, and Lys-292.

Belongs to the tRNA-intron endonuclease family. In terms of assembly, tRNA splicing endonuclease is a heterotetramer composed of TSEN2, TSEN15, TSEN34/LENG5 and TSEN54. tRNA splicing endonuclease complex also contains proteins of the pre-mRNA 3'-end processing machinery such as CLP1, CPSF1, CPSF4 and CSTF2.

Its subcellular location is the nucleus. It localises to the nucleolus. It carries out the reaction pretRNA = a 3'-half-tRNA molecule with a 5'-OH end + a 5'-half-tRNA molecule with a 2',3'-cyclic phosphate end + an intron with a 2',3'-cyclic phosphate and a 5'-hydroxyl terminus.. Constitutes one of the two catalytic subunit of the tRNA-splicing endonuclease complex, a complex responsible for identification and cleavage of the splice sites in pre-tRNA. It cleaves pre-tRNA at the 5'- and 3'-splice sites to release the intron. The products are an intron and two tRNA half-molecules bearing 2',3'-cyclic phosphate and 5'-OH termini. There are no conserved sequences at the splice sites, but the intron is invariably located at the same site in the gene, placing the splice sites an invariant distance from the constant structural features of the tRNA body. The tRNA splicing endonuclease is also involved in mRNA processing via its association with pre-mRNA 3'-end processing factors, establishing a link between pre-tRNA splicing and pre-mRNA 3'-end formation, suggesting that the endonuclease subunits function in multiple RNA-processing events. The protein is tRNA-splicing endonuclease subunit Sen34 (Tsen34) of Mus musculus (Mouse).